Reading from the N-terminus, the 111-residue chain is T cell receptor beta variable 20-1 (111 aa).

Residues Met-1–Gly-15 form the signal peptide. The Ig-like domain maps to Ala-16–Arg-111. A disulfide bond links Cys-37 and Cys-108.

As to quaternary structure, alpha-beta TR is a heterodimer composed of an alpha and beta chain; disulfide-linked. The alpha-beta TR is associated with the transmembrane signaling CD3 coreceptor proteins to form the TR-CD3 (TcR or TCR). The assembly of alpha-beta TR heterodimers with CD3 occurs in the endoplasmic reticulum where a single alpha-beta TR heterodimer associates with one CD3D-CD3E heterodimer, one CD3G-CD3E heterodimer and one CD247 homodimer forming a stable octameric structure. CD3D-CD3E and CD3G-CD3E heterodimers preferentially associate with TR alpha and TR beta chains, respectively. The association of the CD247 homodimer is the last step of TcR assembly in the endoplasmic reticulum and is required for transport to the cell surface.

Its subcellular location is the cell membrane. V region of the variable domain of T cell receptor (TR) beta chain that participates in the antigen recognition. Alpha-beta T cell receptors are antigen specific receptors which are essential to the immune response and are present on the cell surface of T lymphocytes. Recognize peptide-major histocompatibility (MH) (pMH) complexes that are displayed by antigen presenting cells (APC), a prerequisite for efficient T cell adaptive immunity against pathogens. Binding of alpha-beta TR to pMH complex initiates TR-CD3 clustering on the cell surface and intracellular activation of LCK that phosphorylates the ITAM motifs of CD3G, CD3D, CD3E and CD247 enabling the recruitment of ZAP70. In turn ZAP70 phosphorylates LAT, which recruits numerous signaling molecules to form the LAT signalosome. The LAT signalosome propagates signal branching to three major signaling pathways, the calcium, the mitogen-activated protein kinase (MAPK) kinase and the nuclear factor NF-kappa-B (NF-kB) pathways, leading to the mobilization of transcription factors that are critical for gene expression and essential for T cell growth and differentiation. The T cell repertoire is generated in the thymus, by V-(D)-J rearrangement. This repertoire is then shaped by intrathymic selection events to generate a peripheral T cell pool of self-MH restricted, non-autoaggressive T cells. Post-thymic interaction of alpha-beta TR with the pMH complexes shapes TR structural and functional avidity. The polypeptide is T cell receptor beta variable 20-1 (Homo sapiens (Human)).